Consider the following 77-residue polypeptide: Small ribosomal subunit protein uS17 (77 aa).

It belongs to the universal ribosomal protein uS17 family. Part of the 30S ribosomal subunit.

Its function is as follows. One of the primary rRNA binding proteins, it binds specifically to the 5'-end of 16S ribosomal RNA. This is Small ribosomal subunit protein uS17 from Rickettsia conorii (strain ATCC VR-613 / Malish 7).